The following is a 614-amino-acid chain: Methionine--tRNA ligase (614 aa).

A 'HIGH' region motif is present at residues 11–21 (PYTNGPRHIGH). Zn(2+)-binding residues include Cys143, Cys146, Cys156, and Cys159. The short motif at 359–363 (QFSTS) is the 'KMSKS' region element. An ATP-binding site is contributed by Thr362.

Belongs to the class-I aminoacyl-tRNA synthetase family. MetG type 1 subfamily. Monomer. Zn(2+) is required as a cofactor.

It localises to the cytoplasm. It carries out the reaction tRNA(Met) + L-methionine + ATP = L-methionyl-tRNA(Met) + AMP + diphosphate. Functionally, is required not only for elongation of protein synthesis but also for the initiation of all mRNA translation through initiator tRNA(fMet) aminoacylation. The sequence is that of Methionine--tRNA ligase from Beutenbergia cavernae (strain ATCC BAA-8 / DSM 12333 / CCUG 43141 / JCM 11478 / NBRC 16432 / NCIMB 13614 / HKI 0122).